A 439-amino-acid chain; its full sequence is Xylose isomerase (439 aa).

Active-site residues include His101 and Asp104. Mg(2+) contacts are provided by Glu232, Glu268, His271, Asp296, Asp307, Asp309, and Asp339.

The protein belongs to the xylose isomerase family. As to quaternary structure, homotetramer. Mg(2+) is required as a cofactor.

Its subcellular location is the cytoplasm. It catalyses the reaction alpha-D-xylose = alpha-D-xylulofuranose. In Pectobacterium atrosepticum (strain SCRI 1043 / ATCC BAA-672) (Erwinia carotovora subsp. atroseptica), this protein is Xylose isomerase.